The following is a 242-amino-acid chain: Glutamine transport ATP-binding protein GlnQ (242 aa).

The region spanning 2–236 is the ABC transporter domain; sequence ITFQNVNKHY…PKEERARLFL (235 aa). Residue 34–41 coordinates ATP; the sequence is GPSGSGKS.

This sequence belongs to the ABC transporter superfamily. The complex is composed of two ATP-binding proteins (GlnQ), two transmembrane proteins (GlnM and GlnP) and a solute-binding protein (GlnH).

The protein localises to the cell membrane. In terms of biological role, part of the ABC transporter complex GlnHMPQ involved in glutamine transport. Probably responsible for energy coupling to the transport system. The sequence is that of Glutamine transport ATP-binding protein GlnQ (glnQ) from Bacillus subtilis (strain 168).